The sequence spans 542 residues: Carbamoyl phosphate synthase large chain, C-terminal section (542 aa).

Residues 1 to 389 (MSDKVLVIGA…WKAQLAAGHE (389 aa)) form a carbamoyl phosphate synthetic domain region. The region spanning 122 to 316 (SKLLKKLGIP…LAKIGTKAIL (195 aa)) is the ATP-grasp domain. The ATP site is built by arginine 158, arginine 197, isoleucine 199, glutamate 204, glycine 230, valine 231, histidine 232, serine 233, glutamine 273, and glutamate 287. Mg(2+) contacts are provided by glutamine 273, glutamate 287, and asparagine 289. Glutamine 273, glutamate 287, and asparagine 289 together coordinate Mn(2+). The region spanning 388 to 542 (HELPLEGTAV…KPEELTRYGG (155 aa)) is the MGS-like domain. Residues 390 to 542 (LPLEGTAVIS…KPEELTRYGG (153 aa)) are allosteric domain.

The protein belongs to the CarB family. As to quaternary structure, composed of two chains; the small (or glutamine) chain promotes the hydrolysis of glutamine to ammonia, which is used by the large (or ammonia) chain to synthesize carbamoyl phosphate. Tetramer of heterodimers (alpha,beta)4. The cofactor is Mg(2+). It depends on Mn(2+) as a cofactor.

It carries out the reaction hydrogencarbonate + L-glutamine + 2 ATP + H2O = carbamoyl phosphate + L-glutamate + 2 ADP + phosphate + 2 H(+). The enzyme catalyses hydrogencarbonate + NH4(+) + 2 ATP = carbamoyl phosphate + 2 ADP + phosphate + 2 H(+). The protein operates within amino-acid biosynthesis; L-arginine biosynthesis; carbamoyl phosphate from bicarbonate: step 1/1. It functions in the pathway pyrimidine metabolism; UMP biosynthesis via de novo pathway; (S)-dihydroorotate from bicarbonate: step 1/3. Its function is as follows. Large subunit of the glutamine-dependent carbamoyl phosphate synthetase (CPSase). CPSase catalyzes the formation of carbamoyl phosphate from the ammonia moiety of glutamine, carbonate, and phosphate donated by ATP, constituting the first step of 2 biosynthetic pathways, one leading to arginine and/or urea and the other to pyrimidine nucleotides. The large subunit (synthetase) binds the substrates ammonia (free or transferred from glutamine from the small subunit), hydrogencarbonate and ATP and carries out an ATP-coupled ligase reaction, activating hydrogencarbonate by forming carboxy phosphate which reacts with ammonia to form carbamoyl phosphate. This Methanopyrus kandleri (strain AV19 / DSM 6324 / JCM 9639 / NBRC 100938) protein is Carbamoyl phosphate synthase large chain, C-terminal section (carB2).